The chain runs to 201 residues: Ependymin-related protein 2 (201 aa).

Positions 1–21 (MILQVVLLLACLSGAIVSTGA) are cleaved as a signal peptide. Asn38 and Asn137 each carry an N-linked (GlcNAc...) asparagine glycan. The Microbody targeting signal signature appears at 199 to 201 (CRA).

The protein belongs to the ependymin family. As to expression, component of the acid-soluble and acid-insoluble organic matrix of calcified shell layers (at protein level).

Its subcellular location is the secreted. This Haliotis asinina (Donkey's ear abalone) protein is Ependymin-related protein 2.